The primary structure comprises 191 residues: Guanylate kinase (191 aa).

The Guanylate kinase-like domain occupies 9–187 (GQLIVITGPS…SLIALETAIF (179 aa)). 16–23 (GPSGVGKG) contacts ATP.

The protein belongs to the guanylate kinase family.

It is found in the cytoplasm. It carries out the reaction GMP + ATP = GDP + ADP. Essential for recycling GMP and indirectly, cGMP. The protein is Guanylate kinase of Thermosynechococcus vestitus (strain NIES-2133 / IAM M-273 / BP-1).